We begin with the raw amino-acid sequence, 852 residues long: Bifunctional uridylyltransferase/uridylyl-removing enzyme (852 aa).

The interval 1 to 318 (MPENLSSALE…STPVRVTLRI (318 aa)) is uridylyltransferase. The tract at residues 319 to 672 (DDDYIQVNNQ…SRILPQSDSF (354 aa)) is uridylyl-removing. The HD domain maps to 436–558 (VDDHILAVVR…VQTHERLSAL (123 aa)). 2 ACT domains span residues 673–757 (QVMV…SCNR) and 785–852 (SVEI…EQLA).

The protein belongs to the GlnD family. It depends on Mg(2+) as a cofactor.

The catalysed reaction is [protein-PII]-L-tyrosine + UTP = [protein-PII]-uridylyl-L-tyrosine + diphosphate. The enzyme catalyses [protein-PII]-uridylyl-L-tyrosine + H2O = [protein-PII]-L-tyrosine + UMP + H(+). Uridylyltransferase (UTase) activity is inhibited by glutamine, while glutamine activates uridylyl-removing (UR) activity. Functionally, modifies, by uridylylation and deuridylylation, the PII regulatory proteins (GlnB and homologs), in response to the nitrogen status of the cell that GlnD senses through the glutamine level. Under low glutamine levels, catalyzes the conversion of the PII proteins and UTP to PII-UMP and PPi, while under higher glutamine levels, GlnD hydrolyzes PII-UMP to PII and UMP (deuridylylation). Thus, controls uridylylation state and activity of the PII proteins, and plays an important role in the regulation of nitrogen assimilation and metabolism. The protein is Bifunctional uridylyltransferase/uridylyl-removing enzyme of Neisseria gonorrhoeae (strain ATCC 700825 / FA 1090).